We begin with the raw amino-acid sequence, 915 residues long: Protein MEI2-like 1 (915 aa).

The tract at residues 1–90 (MPSDIMEQRG…NTTNGSQWES (90 aa)) is disordered. Over residues 16–25 (HFHEDIHITS) the composition is skewed to basic and acidic residues. Polar residues predominate over residues 50 to 65 (MPKSSWTSESYQLKPQ). A compositionally biased stretch (low complexity) spans 66–77 (SSFSGSHPSGSP). Residue S76 is modified to Phosphoserine. Over residues 78 to 89 (NARNTTNGSQWE) the composition is skewed to polar residues. 2 RRM domains span residues 217-290 (RTLL…YSIS) and 302-375 (GALL…PTYP). 2 disordered regions span residues 690 to 723 (PGRS…SSSN) and 854 to 915 (LFHT…LKEN). The span at 705–723 (PNERYRNLSHRRSESSSSN) shows a compositional bias: basic and acidic residues. Residues 882-898 (RSSSIDNYNSFSISSVS) show a composition bias toward polar residues.

Expressed in roots, shoots, leaves, flowers and siliques.

Probable RNA-binding transcriptional activator that plays a role in meiosis and vegetative growth. May be a downstream effector of TOR signaling pathway and recruited by RAPTOR1 for TOR substrate. This chain is Protein MEI2-like 1 (ML1), found in Arabidopsis thaliana (Mouse-ear cress).